The following is a 451-amino-acid chain: Glycine--tRNA ligase (451 aa).

Residues Arg-101 and Glu-151 each coordinate substrate. Residues 183–185, 193–198, 267–268, and 312–315 each bind ATP; these read RNE, FRTCEF, EL, and GLTR. Residue 198–202 coordinates substrate; that stretch reads FEQME. 308 to 312 provides a ligand contact to substrate; that stretch reads ETSAG.

This sequence belongs to the class-II aminoacyl-tRNA synthetase family. As to quaternary structure, homodimer.

It is found in the cytoplasm. It carries out the reaction tRNA(Gly) + glycine + ATP = glycyl-tRNA(Gly) + AMP + diphosphate. In terms of biological role, catalyzes the attachment of glycine to tRNA(Gly). The protein is Glycine--tRNA ligase of Treponema denticola (strain ATCC 35405 / DSM 14222 / CIP 103919 / JCM 8153 / KCTC 15104).